The sequence spans 392 residues: Rhizopuspepsin-5 (392 aa).

Positions 1–21 (MKFSLISSCVALAVLVLSTEA) are cleaved as a signal peptide. The propeptide at 22–69 (APNGKKVNIPLTKNKDYKPNAKNAIQKVLAKYHRHRSTSSSSNSTSTD) is activation peptide. The region spanning 85–389 (YFGQVKVGTP…NPTVPQVQIA (305 aa)) is the Peptidase A1 domain. Aspartate 103 is an active-site residue. Cysteine 116 and cysteine 119 are oxidised to a cystine. Residue aspartate 286 is part of the active site. Cysteine 320 and cysteine 353 are oxidised to a cystine.

It belongs to the peptidase A1 family.

The catalysed reaction is Hydrolysis of proteins with broad specificity similar to that of pepsin A, preferring hydrophobic residues at P1 and P1'. Clots milk and activates trypsinogen. Does not cleave 4-Gln-|-His-5, but does cleave 10-His-|-Leu-11 and 12-Val-|-Glu-13 in B chain of insulin.. The polypeptide is Rhizopuspepsin-5 (Rhizopus niveus).